The sequence spans 197 residues: UPF0314 protein R03235 (197 aa).

Helical transmembrane passes span 16-36 (ALWLLACLGVLAIQVLVQHLM) and 152-172 (LPVAATVAIAIVLELFTGYMV).

Belongs to the UPF0314 family.

It is found in the cell membrane. This Rhizobium meliloti (strain 1021) (Ensifer meliloti) protein is UPF0314 protein R03235.